The following is a 570-amino-acid chain: Interleukin-1 receptor accessory protein (570 aa).

The N-terminal stretch at 1-20 is a signal peptide; that stretch reads MGLLWYLMSLSFYGILQSHA. Ig-like C2-type domains lie at 21–128, 139–230, and 243–348; these read SERC…VAFP, NSAM…RTVT, and PQIY…AKVK. Residues 21-367 are Extracellular-facing; the sequence is SERCDDWGLD…VELACGFGAT (347 aa). Intrachain disulfides connect Cys24–Cys122, Cys47–Cys114, Cys137–Cys181, Cys160–Cys212, and Cys266–Cys332. A glycan (N-linked (GlcNAc...) asparagine) is linked at Asn57. Residues 69 to 85 are essential for interaction with PTPRD; that stretch reads IWYWTRQDRDLEEPINF. 3 N-linked (GlcNAc...) asparagine glycosylation sites follow: Asn107, Asn111, and Asn118. 3 N-linked (GlcNAc...) asparagine glycosylation sites follow: Asn196, Asn209, and Asn299. A helical membrane pass occupies residues 368–388; sequence VFLVVVLIVVYHVYWLEMVLF. Topologically, residues 389–570 are cytoplasmic; that stretch reads YRAHFGTDET…GLSYSSLKNV (182 aa). Residues 403–546 form the TIR domain; that stretch reads KEYDIYVSYA…RFWKQLQVAM (144 aa). Glu482 is a catalytic residue. Positions 550–570 are disordered; that stretch reads KSPRWSSNDKQGLSYSSLKNV. Positions 553–570 are enriched in polar residues; it reads RWSSNDKQGLSYSSLKNV.

It belongs to the interleukin-1 receptor family. The interleukin-36 receptor complex is a heterodimer of IL1RL2 and IL1RAP; the association is inhibited by IL36RN. The interleukin-1 receptor complex is a heterodimer of IL1R1 and IL1RAP. Associates with IL1R2 to form a non-signaling interleukin-1 receptor complex. Interacts with IL-33-bound IL1RL1 to form the minimal interleukin-33 signaling complex with a 1:1:1 stoichiometry. Interacts with KIT (independently of stimulation with KITLG/SCF). A mast cell-specific KITLG/SCF-induced interleukin-33 signaling complex contains IL1RL1, IL1RAP, KIT and MYD88. Interacts (via the first immunoglobilin domain) with PTPRD (via the third immunoglobilin domain); induces pre- and postsynaptic differentiation of neurons. As to expression, detected in lung, brain, spleen, thymus and liver. Expressed in brain endothelial cells, astrocytes, microglia and neurons. Isoform 3 is predominantly expressed in brain; expressed in hippocampal neurons.

It localises to the cell membrane. The protein resides in the secreted. The catalysed reaction is NAD(+) + H2O = ADP-D-ribose + nicotinamide + H(+). Coreceptor for IL1RL2 in the IL-36 signaling system. Coreceptor with IL1R1 in the IL-1 signaling system. Associates with IL1R1 bound to IL1B to form the high affinity interleukin-1 receptor complex which mediates interleukin-1-dependent activation of NF-kappa-B and other pathways. Signaling involves the recruitment of adapter molecules such as TOLLIP, MYD88, and IRAK1 or IRAK2 via the respective TIR domains of the receptor/coreceptor subunits. Recruits TOLLIP to the signaling complex. Does not bind to interleukin-1 alone; binding of IL1RN to IL1R1, prevents its association with IL1R1 to form a signaling complex. The cellular response is modulated through a non-signaling association with the membrane IL1R2 decoy receptor. Secreted forms (isoforms 2 and 3) associate with secreted ligand-bound IL1R2 and increase the affinity of secreted IL1R2 for IL1B; this complex formation may be the dominant mechanism for neutralization of IL1B by secreted/soluble receptors. Coreceptor for IL1RL1 in the IL-33 signaling system. Can bidirectionally induce pre- and postsynaptic differentiation of neurons by trans-synaptically binding to PTPRD. May play a role in IL1B-mediated costimulation of IFNG production from T-helper 1 (Th1) cells. In terms of biological role, associates with secreted ligand-bound IL1R2 and increases the affinity of secreted IL1R2 for IL1B; this complex formation may be the dominant mechanism for neutralization of IL1B by secreted/soluble receptors. Enhances the ability of secreted IL1R1 to inhibit IL-33 signaling. Functionally, required for Src phosphorylation by IL1B. Required for IL1B-potentiated NMDA-induced calcium influx in neurons acting in cooperation with IL1R1 isoform 2 to mediate Akt kinase activation. The protein is Interleukin-1 receptor accessory protein (Il1rap) of Mus musculus (Mouse).